Here is a 240-residue protein sequence, read N- to C-terminus: Small ribosomal subunit protein uS3 (240 aa).

Residues 39 to 107 (IRDFIKKEAK…ELHLNIVEVR (69 aa)) enclose the KH type-2 domain. Composition is skewed to basic and acidic residues over residues 212–221 (PQARDRRATE) and 231–240 (PRRDRDRDAR). The interval 212-240 (PQARDRRATEAQDGPSPRGPRRDRDRDAR) is disordered.

Belongs to the universal ribosomal protein uS3 family. In terms of assembly, part of the 30S ribosomal subunit. Forms a tight complex with proteins S10 and S14.

In terms of biological role, binds the lower part of the 30S subunit head. Binds mRNA in the 70S ribosome, positioning it for translation. The polypeptide is Small ribosomal subunit protein uS3 (Paracoccus denitrificans (strain Pd 1222)).